A 613-amino-acid polypeptide reads, in one-letter code: UvrABC system protein C (613 aa).

The 80-residue stretch at 13–92 (DKSGVYIMKD…IKKYKPKYNI (80 aa)) folds into the GIY-YIG domain. The UVR domain maps to 204 to 239 (DEIINDLRIQMETAAEQLDFEKAAQLRNKITSIKQL).

This sequence belongs to the UvrC family. Interacts with UvrB in an incision complex.

The protein localises to the cytoplasm. Its function is as follows. The UvrABC repair system catalyzes the recognition and processing of DNA lesions. UvrC both incises the 5' and 3' sides of the lesion. The N-terminal half is responsible for the 3' incision and the C-terminal half is responsible for the 5' incision. This Ruminiclostridium cellulolyticum (strain ATCC 35319 / DSM 5812 / JCM 6584 / H10) (Clostridium cellulolyticum) protein is UvrABC system protein C.